The chain runs to 304 residues: UDP-N-acetylenolpyruvoylglucosamine reductase (304 aa).

In terms of domain architecture, FAD-binding PCMH-type spans 33-198; it reads KVGGPVDILL…LRATFNLVNG (166 aa). The active site involves arginine 177. Serine 227 acts as the Proton donor in catalysis. Residue glutamate 297 is part of the active site.

This sequence belongs to the MurB family. It depends on FAD as a cofactor.

It localises to the cytoplasm. The enzyme catalyses UDP-N-acetyl-alpha-D-muramate + NADP(+) = UDP-N-acetyl-3-O-(1-carboxyvinyl)-alpha-D-glucosamine + NADPH + H(+). It functions in the pathway cell wall biogenesis; peptidoglycan biosynthesis. Functionally, cell wall formation. The sequence is that of UDP-N-acetylenolpyruvoylglucosamine reductase from Clostridium beijerinckii (strain ATCC 51743 / NCIMB 8052) (Clostridium acetobutylicum).